The following is a 360-amino-acid chain: Phosphoserine aminotransferase (360 aa).

Arg41 lines the L-glutamate pocket. Trp101, Thr152, Asp172, and Gln195 together coordinate pyridoxal 5'-phosphate. The residue at position 196 (Lys196) is an N6-(pyridoxal phosphate)lysine. Residue 237 to 238 (NT) coordinates pyridoxal 5'-phosphate.

The protein belongs to the class-V pyridoxal-phosphate-dependent aminotransferase family. SerC subfamily. In terms of assembly, homodimer. It depends on pyridoxal 5'-phosphate as a cofactor.

It localises to the cytoplasm. The catalysed reaction is O-phospho-L-serine + 2-oxoglutarate = 3-phosphooxypyruvate + L-glutamate. The enzyme catalyses 4-(phosphooxy)-L-threonine + 2-oxoglutarate = (R)-3-hydroxy-2-oxo-4-phosphooxybutanoate + L-glutamate. It participates in amino-acid biosynthesis; L-serine biosynthesis; L-serine from 3-phospho-D-glycerate: step 2/3. It functions in the pathway cofactor biosynthesis; pyridoxine 5'-phosphate biosynthesis; pyridoxine 5'-phosphate from D-erythrose 4-phosphate: step 3/5. Its function is as follows. Catalyzes the reversible conversion of 3-phosphohydroxypyruvate to phosphoserine and of 3-hydroxy-2-oxo-4-phosphonooxybutanoate to phosphohydroxythreonine. This chain is Phosphoserine aminotransferase, found in Burkholderia vietnamiensis (strain G4 / LMG 22486) (Burkholderia cepacia (strain R1808)).